The sequence spans 558 residues: Inositol-3-phosphate synthase (558 aa).

The segment at Met-1 to Glu-34 is disordered. NAD(+) contacts are provided by Gly-99, Gly-100, Asn-101, Asn-102, Asp-174, Ser-210, Ile-211, Gln-221, Arg-224, Thr-262, Ala-263, Asn-264, Thr-265, Gly-313, Ser-314, Asp-338, Ser-341, Asn-372, Asn-373, Asp-374, Lys-387, Gly-439, Asp-440, Asp-468, and Ser-469.

This sequence belongs to the myo-inositol 1-phosphate synthase family. In terms of assembly, homotetramer. Requires NAD(+) as cofactor.

Its subcellular location is the cytoplasm. It carries out the reaction D-glucose 6-phosphate = 1D-myo-inositol 3-phosphate. Its pathway is polyol metabolism; myo-inositol biosynthesis; myo-inositol from D-glucose 6-phosphate: step 1/2. Its function is as follows. Key enzyme in myo-inositol biosynthesis pathway that catalyzes the conversion of glucose 6-phosphate to 1-myo-inositol 1-phosphate in a NAD-dependent manner. Rate-limiting enzyme in the synthesis of all inositol-containing compounds. This chain is Inositol-3-phosphate synthase, found in Cryptococcus neoformans var. grubii serotype A (strain H99 / ATCC 208821 / CBS 10515 / FGSC 9487) (Filobasidiella neoformans var. grubii).